Here is a 737-residue protein sequence, read N- to C-terminus: Methylcrotonoyl-CoA carboxylase subunit alpha, mitochondrial (737 aa).

The transit peptide at 1-33 (MASRLLLLPRRRSRHGGASLLLARLLSSSSSEA) directs the protein to the mitochondrion. The Biotin carboxylation domain maps to 38–485 (AVEKVLVANR…DTHFIERYQN (448 aa)). ATP contacts are provided by residues K153, 185–246 (ANKI…PRHI), E237, and H272. The region spanning 157 to 355 (KRIMGAAGVP…LVEWQIRIAN (199 aa)) is the ATP-grasp domain. E312, E326, and N328 together coordinate Mn(2+). The active site involves R330. The segment at 636–665 (YRQTLRAEQSPDDSSQPSASSEARSHPKGS) is disordered. Over residues 647–657 (DDSSQPSASSE) the composition is skewed to low complexity. Residues 656-732 (SEARSHPKGS…FDSSVLFTVK (77 aa)) form the Biotinyl-binding domain. K698 bears the N6-biotinyllysine mark.

As to quaternary structure, probably a heterodimer composed of biotin-containing alpha subunits and beta subunits. It depends on biotin as a cofactor. Mn(2+) is required as a cofactor.

It is found in the mitochondrion matrix. It carries out the reaction 3-methylbut-2-enoyl-CoA + hydrogencarbonate + ATP = 3-methyl-(2E)-glutaconyl-CoA + ADP + phosphate + H(+). Its pathway is amino-acid degradation; L-leucine degradation; (S)-3-hydroxy-3-methylglutaryl-CoA from 3-isovaleryl-CoA: step 2/3. In terms of biological role, biotin-attachment subunit of the 3-methylcrotonyl-CoA carboxylase, an enzyme that catalyzes the conversion of 3-methylcrotonyl-CoA to 3-methylglutaconyl-CoA, a critical step for leucine and isovaleric acid catabolism. The chain is Methylcrotonoyl-CoA carboxylase subunit alpha, mitochondrial (MCCA) from Oryza sativa subsp. japonica (Rice).